The primary structure comprises 234 residues: Probable transcriptional regulatory protein TcrX (234 aa).

In terms of domain architecture, Response regulatory spans 10-124; sequence TVLVVDDEPV…EVVLRLRALL (115 aa). At Asp-59 the chain carries 4-aspartylphosphate. A DNA-binding region (ompR/PhoB-type) is located at residues 135-232; that stretch reads GAQLVVGDLV…LRGAGYVLKP (98 aa).

Post-translationally, phosphorylated by TcrY.

It localises to the cytoplasm. Member of the two-component regulatory system TcrY/TcrX. The protein is Probable transcriptional regulatory protein TcrX (tcrX) of Mycobacterium tuberculosis (strain ATCC 25618 / H37Rv).